A 644-amino-acid polypeptide reads, in one-letter code: Chaperone protein DnaK (644 aa).

The residue at position 199 (Thr-199) is a Phosphothreonine; by autocatalysis. Residues 605 to 644 (KKSSEGQAAQGQTQSQESTKPAEEGVVDAEFEEVKEEDKK) form a disordered region. Residues 609–623 (EGQAAQGQTQSQEST) are compositionally biased toward polar residues. Over residues 629-644 (GVVDAEFEEVKEEDKK) the composition is skewed to acidic residues.

This sequence belongs to the heat shock protein 70 family.

Functionally, acts as a chaperone. The protein is Chaperone protein DnaK of Legionella pneumophila subsp. pneumophila (strain Philadelphia 1 / ATCC 33152 / DSM 7513).